The chain runs to 421 residues: O-glycoside alpha-1,2-mannosyltransferase homolog 5 (421 aa).

Residue Glu-318 is the Nucleophile of the active site.

This sequence belongs to the glycosyltransferase 15 family.

Its subcellular location is the cytoplasm. Probable mannosyltransferase involved in O-glycosylation of cell wall and secreted proteins. The sequence is that of O-glycoside alpha-1,2-mannosyltransferase homolog 5 (omh5) from Schizosaccharomyces pombe (strain 972 / ATCC 24843) (Fission yeast).